The following is a 450-amino-acid chain: Thiamine biosynthesis regulatory protein (450 aa).

Residues 1–12 (MVNSKRQQRSKK) are compositionally biased toward basic residues. A disordered region spans residues 1 to 23 (MVNSKRQQRSKKVASSSKVPPTK). The segment covering 13–23 (VASSSKVPPTK) has biased composition (low complexity). Positions 30–57 (CWACRFKKRRCDENRPICSLCAKHGDNC) form a DNA-binding region, zn(2)-C6 fungal-type. The segment at 210-234 (TDQLPSPGHSMSSAEETTTAALSSP) is disordered.

It is found in the nucleus. Positive regulator of thiamine biosynthesis. The sequence is that of Thiamine biosynthesis regulatory protein (THI2) from Saccharomyces cerevisiae (strain ATCC 204508 / S288c) (Baker's yeast).